A 694-amino-acid chain; its full sequence is DNA polymerase eta (694 aa).

In terms of domain architecture, UmuC spans 9 to 258; the sequence is VALVDMDCFF…MPIRKIRSLG (250 aa). Asp13 and Met14 together coordinate Mg(2+). 2 residues coordinate Mn(2+): Asp13 and Met14. An a 2'-deoxyribonucleoside 5'-triphosphate-binding site is contributed by Arg61. Residues Asp115 and Glu116 each contribute to the Mg(2+) site. Mn(2+) is bound by residues Asp115 and Glu116. Glu116 is an active-site residue. Residues 565-598 form a disordered region; it reads DSGPDDGAVKPVSSKAVSTEMNVAGDSPNVLDSP. A UBZ3-type zinc finger spans residues 609–643; it reads ATEDQVLCEKCDSLVPVWDMPEHTDYHFALELQKS. The Zn(2+) site is built by Cys616, Cys619, His631, and His635. The disordered stretch occupies residues 651–694; that stretch reads KPQAIPAVSPQGKRNPKSPSASSSKRLRPHGMQTLESFFKPLTH. Residues Lys663, Lys667, and Lys675 each participate in a glycyl lysine isopeptide (Lys-Gly) (interchain with G-Cter in ubiquitin) cross-link. The PIP-box motif lies at 682–689; the sequence is MQTLESFF. Lys690 is covalently cross-linked (Glycyl lysine isopeptide (Lys-Gly) (interchain with G-Cter in ubiquitin)).

This sequence belongs to the DNA polymerase type-Y family. In terms of assembly, interacts with REV1. Interacts with monoubiquitinated PCNA, but not unmodified PCNA. Interacts with POLI; this interaction targets POLI to the replication machinery. Interacts with PALB2 and BRCA2; the interactions are direct and are required to sustain the recruitment of POLH at blocked replication forks and to stimulate POLH-dependent DNA synthesis on D loop substrates. Interacts (via C-terminus) with TRAIP. Interacts with ubiquitin. Interacts with POLDIP2. Requires Mg(2+) as cofactor. Mn(2+) serves as cofactor. Monoubiquitinated by RCHY1/PIRH2. Ubiquitination depends on integrity of the UBZ3-type zinc finger domain and is enhanced by TRAIP. Ubiquitination inhibits the ability of PolH to interact with PCNA and to bypass UV-induced lesions. In terms of tissue distribution, ubiquitous.

Its subcellular location is the nucleus. The enzyme catalyses DNA(n) + a 2'-deoxyribonucleoside 5'-triphosphate = DNA(n+1) + diphosphate. With respect to regulation, the enzyme in complex with the DNA substrate binds a third divalent metal cation. The binding of this third divalent cation, which is coordinated by water molecules and two oxygen atoms from DNA and dNTP, is essential for catalyzing the DNA synthesis. Its function is as follows. DNA polymerase specifically involved in the DNA repair by translesion synthesis (TLS). Due to low processivity on both damaged and normal DNA, cooperates with the heterotetrameric (REV3L, REV7, POLD2 and POLD3) POLZ complex for complete bypass of DNA lesions. Inserts one or 2 nucleotide(s) opposite the lesion, the primer is further extended by the tetrameric POLZ complex. In the case of 1,2-intrastrand d(GpG)-cisplatin cross-link, inserts dCTP opposite the 3' guanine. Particularly important for the repair of UV-induced pyrimidine dimers. Although inserts the correct base, may cause base transitions and transversions depending upon the context. May play a role in hypermutation at immunoglobulin genes. Forms a Schiff base with 5'-deoxyribose phosphate at abasic sites, but does not have any lyase activity, preventing the release of the 5'-deoxyribose phosphate (5'-dRP) residue. This covalent trapping of the enzyme by the 5'-dRP residue inhibits its DNA synthetic activity during base excision repair, thereby avoiding high incidence of mutagenesis. Targets POLI to replication foci. The polypeptide is DNA polymerase eta (Polh) (Mus musculus (Mouse)).